Here is a 626-residue protein sequence, read N- to C-terminus: Chaperone protein HtpG (626 aa).

The tract at residues 1-339 is a; substrate-binding; that stretch reads MSTNQETRGF…SNDLPLNVSR (339 aa). A b region spans residues 340–555; sequence EILQDNKVTA…NDQMTTQMAK (216 aa). Positions 556-626 are c; sequence LFAAAGQPVP…FIKRINKLLG (71 aa).

This sequence belongs to the heat shock protein 90 family. Homodimer.

The protein resides in the cytoplasm. Its function is as follows. Molecular chaperone. Has ATPase activity. This is Chaperone protein HtpG from Aggregatibacter actinomycetemcomitans (Actinobacillus actinomycetemcomitans).